Consider the following 316-residue polypeptide: MRVLLAPMEGVLDSLVRELLTEVNDYDLCITEFVRVVDQLLPVKVFHRICPELQNASRTPSGTLVRVQLLGQFPQWLAENAARAVELGSWGVDLNCGCPSKTVNGSGGGATLLKDPELIYQGAKAMREAVPAHLPVSVKVRLGWDSGEKKFEIADAVQQAGATELVVHGRTKEQGYRAEHIDWQAIGEIRQRLNIPVIANGEIWDWQSAQECMAISGCDSVMIGRGALNIPNLSRVVKYNEPRMPWPEVVALLQKYTRLEKQSDTGLYHVARIKQWLSYLRKEYDEATELFQHVRVLNNSPDIARAIQAIDIGKLR.

FMN contacts are provided by residues 7-9 (PME) and Q68. C98 functions as the Proton donor in the catalytic mechanism. Residues K139, 200-202 (NGE), and 224-225 (GR) contribute to the FMN site.

The protein belongs to the Dus family. DusC subfamily. FMN serves as cofactor.

It catalyses the reaction 5,6-dihydrouridine(16) in tRNA + NADP(+) = uridine(16) in tRNA + NADPH + H(+). The enzyme catalyses 5,6-dihydrouridine(16) in tRNA + NAD(+) = uridine(16) in tRNA + NADH + H(+). Catalyzes the synthesis of 5,6-dihydrouridine (D), a modified base found in the D-loop of most tRNAs, via the reduction of the C5-C6 double bond in target uridines. Specifically modifies U16 in tRNAs. In Escherichia coli O157:H7, this protein is tRNA-dihydrouridine(16) synthase.